We begin with the raw amino-acid sequence, 125 residues long: MAERVARLSSQRAVVIFGASNCFMCHVVKTLFSELGVSWAVHEVDKDPNGKDVERALAGMVGRTPPVPAVFIGGKLVGPTDQVMSLHLAGKLVPLLREAGALWLRDTKYSYILPANQLINYRSIN.

Residues 2 to 103 enclose the Glutaredoxin domain; sequence AERVARLSSQ…PLLREAGALW (102 aa). An intrachain disulfide couples Cys-22 to Cys-25.

The protein belongs to the glutaredoxin family. CC-type subfamily.

It localises to the cytoplasm. Has a glutathione-disulfide oxidoreductase activity in the presence of NADPH and glutathione reductase. Reduces low molecular weight disulfides and proteins. The chain is Putative glutaredoxin-C2 (GRXC2) from Oryza sativa subsp. japonica (Rice).